Reading from the N-terminus, the 221-residue chain is Serine/arginine-rich splicing factor 2 (221 aa).

Ser-2 bears the N-acetylserine mark. Residue Ser-2 is modified to Phosphoserine. One can recognise an RRM domain in the interval Thr-14–Tyr-92. A phosphothreonine mark is found at Thr-22 and Thr-25. Ser-26 carries the phosphoserine modification. Lys-52 bears the N6-acetyllysine mark. The segment at Tyr-92 to Ser-221 is disordered. Composition is skewed to basic residues over residues Arg-117–Ser-171 and Ser-179–Ser-189. Residues Ser-189, Ser-191, Ser-204, Ser-206, Ser-208, Ser-212, and Ser-220 each carry the phosphoserine modification.

The protein belongs to the splicing factor SR family. As to quaternary structure, in vitro, self-associates and binds SRSF1/SFRS1 (ASF/SF2), SNRNP70 and U2AF1 but not U2AF2. Binds SREK1/SFRS12. Interacts with CCNL1 and CCNL2. Interacts with SCAF11. Interacts with ZRSR2/U2AF1-RS2. Interacts with CCDC55 (via C-terminus). Interacts with BRDT. In terms of processing, extensively phosphorylated on serine residues in the RS domain. Phosphorylated by SRPK2 and this causes its redistribution from the nuclear speckle to nucleoplasm and controls cell fate decision in response to cisplatin treatment. KAT5/TIP60 inhibits its phosphorylation by preventing SRPK2 nuclear translocation. Post-translationally, acetylation on Lys-52 by KAT5/TIP60 promotes its proteasomal degradation. This effect is counterbalanced by HDAC6, which positively controls SRSF2 protein level by deacetylating it and preventing its proteasomal degradation.

The protein resides in the nucleus. The protein localises to the nucleoplasm. It localises to the nucleus speckle. Necessary for the splicing of pre-mRNA. It is required for formation of the earliest ATP-dependent splicing complex and interacts with spliceosomal components bound to both the 5'- and 3'-splice sites during spliceosome assembly. It also is required for ATP-dependent interactions of both U1 and U2 snRNPs with pre-mRNA. Interacts with other spliceosomal components, via the RS domains, to form a bridge between the 5'- and 3'-splice site binding components, U1 snRNP and U2AF. Binds to purine-rich RNA sequences, either 5'-AGSAGAGTA-3' (S=C or G) or 5'-GTTCGAGTA-3'. Can bind to beta-globin mRNA and commit it to the splicing pathway. The phosphorylated form (by SRPK2) is required for cellular apoptosis in response to cisplatin treatment. The sequence is that of Serine/arginine-rich splicing factor 2 (SRSF2) from Sus scrofa (Pig).